Here is a 440-residue protein sequence, read N- to C-terminus: uncharacterized protein (440 aa).

A signal peptide spans 1–17 (MDRFFCTVWVWSVLFGA). Cys18 carries N-palmitoyl cysteine lipidation. Cys18 carries the S-diacylglycerol cysteine lipid modification. Positions 241-268 (SALQERPSSPEPVVSTIPSPEGEENSAA) are disordered.

It localises to the cell membrane. This is an uncharacterized protein from Treponema pallidum (strain Nichols).